The sequence spans 1166 residues: Reverse gyrase 2 (1166 aa).

The RG N-terminal-type zinc-finger motif lies at 1-40 (MINVMYKNSCPNCGGDISGDRLLNGLPCEACLPYINGIDD). Zn(2+)-binding residues include C10, C13, C28, and C31. Residues Q92 and 109-116 (APTGLGKT) each bind ATP. One can recognise a Helicase ATP-binding domain in the interval 96–285 (LRRLASNQSF…ALRLLTGFEP (190 aa)). Positions 190–193 (DDAD) match the DEAD box motif. Residues 576–1166 (FNISTGLLIV…VNPLKSEQNV (591 aa)) form a topoisomerase I region. The 164-residue stretch at 580-743 (TGLLIVESPT…NVYRVVYHEI (164 aa)) folds into the Toprim domain. E586 contacts Mg(2+). Residues 662–689 (IKKCLDCNKIFSSASDKCPYCGSANLQS) form an RG C-terminal-type zinc finger. Zn(2+) is bound by residues C665, C668, C679, and C682. D712 contributes to the Mg(2+) binding site. Positions 759 to 1157 (NTNLVMSQIV…EIFSEISTLV (399 aa)) constitute a Topo IA-type catalytic domain. Y903 functions as the O-(5'-phospho-DNA)-tyrosine intermediate in the catalytic mechanism.

This sequence in the N-terminal section; belongs to the DEAD box helicase family. DDVD subfamily. It in the C-terminal section; belongs to the type IA topoisomerase family. Monomer. Zn(2+) is required as a cofactor. Mg(2+) serves as cofactor.

It is found in the cytoplasm. The enzyme catalyses ATP + H2O = ADP + phosphate + H(+). Its activity is regulated as follows. At least one of the 2 proteins is inhibited by actinomycin D. Less sensitive to NaCl than TopR1, maximal positive supercoiling is observed with 100 mM NaCl; as NaCl rises higher than 400 mM supercoiling decreases. At 600 mM NaCl relaxes but does not introduce positive supercoils into negatively supercoiled substrate. In terms of biological role, modifies the topological state of DNA by introducing positive supercoils in an ATP-dependent process. A highly processive enzyme, it introduces a large number of positive supercoils directly in a negatively supercoiled substrate. At 75 degrees Celsius introduces more than 23 positive supercoils into pTZ18R DNA (probably 2860 bp), more than TopR1; unlike TopR1 little to no relaxation of the negatively supercoiled substrate is seen in the presence of ATP, in the absence of ATP no activity is seen. At 45 degrees Celsius the enzyme is slower and in vitro individual steps can be detected. It cleaves transiently a single DNA strand and remains covalently bound to the 5' DNA end through a tyrosine residue. May be involved in DNA damage response. May be involved in rewinding the DNA strands in the regions of the chromosome that have opened up to allow transcription or replication. There are 2 genes for this protein in the cell. During exponential growth this is the more highly expressed isoform (about 125 molecules per cell at 80 degrees Celsius, about 117 molecules at 88 degrees Celsius); this isoform is less active at higher temperature. Grows actively at both 80 and 88 degrees Celsius; survives a long exposure at 45 degrees Celsius without DNA replication or cell division occurring. Experiments using whole cell extracts do not distinguish which isoform is present, the results are probably a mixture of the two forms. The chain is Reverse gyrase 2 from Saccharolobus solfataricus (strain ATCC 35092 / DSM 1617 / JCM 11322 / P2) (Sulfolobus solfataricus).